A 166-amino-acid polypeptide reads, in one-letter code: Protein adg1 (166 aa).

An N-terminal signal peptide occupies residues 1–22 (MFLRSIFQTLCAVSFLAGSVFA).

It localises to the endoplasmic reticulum. This Schizosaccharomyces pombe (strain 972 / ATCC 24843) (Fission yeast) protein is Protein adg1 (adg1).